Consider the following 559-residue polypeptide: PHD finger protein 1 (559 aa).

A Tudor domain is found at Pro29 to Glu86. 2 PHD-type zinc fingers span residues Glu87–Ala142 and Gln186–Gly240. Disordered stretches follow at residues Pro338–Arg434 and His448–Ser526. A compositionally biased stretch (basic and acidic residues) spans Trp369–Glu386. 2 stretches are compositionally biased toward polar residues: residues Asn417–Tyr426 and Pro449–Asp459. Residues Ser481–Pro515 show a composition bias toward low complexity.

It belongs to the Polycomblike family. Associated component of the PRC2 complex. Interacts with p53/TP53. Interacts with CHMP1. As to expression, testis-specific.

It localises to the nucleus. The protein resides in the cytoplasm. It is found in the cytoskeleton. The protein localises to the microtubule organizing center. Its subcellular location is the centrosome. Polycomb group (PcG) that specifically binds histone H3 trimethylated at 'Lys-36' (H3K36me3) and recruits the PRC2 complex. Involved in DNA damage response and is recruited at double-strand breaks (DSBs). Acts by binding to H3K36me3, a mark for transcriptional activation, and recruiting the PRC2 complex: it is however unclear whether recruitment of the PRC2 complex to H3K36me3 leads to enhance or inhibit H3K27me3 methylation mediated by the PRC2 complex. According to some reports, PRC2 recruitment by PHF1 promotes H3K27me3 and subsequent gene silencing by inducing spreading of PRC2 and H3K27me3 into H3K36me3 loci. According to other reports, PHF1 recruits the PRC2 complex at double-strand breaks (DSBs) and inhibits the activity of PRC2. Regulates p53/TP53 stability and prolonges its turnover: may act by specifically binding to a methylated from of p53/TP53. The polypeptide is PHD finger protein 1 (Phf1) (Mus musculus (Mouse)).